A 216-amino-acid polypeptide reads, in one-letter code: Large ribosomal subunit protein uL1 (216 aa).

The protein belongs to the universal ribosomal protein uL1 family. As to quaternary structure, part of the 50S ribosomal subunit.

Binds directly to 23S rRNA. Probably involved in E site tRNA release. Its function is as follows. Protein L1 is also a translational repressor protein, it controls the translation of its operon by binding to its mRNA. This is Large ribosomal subunit protein uL1 from Thermococcus kodakarensis (strain ATCC BAA-918 / JCM 12380 / KOD1) (Pyrococcus kodakaraensis (strain KOD1)).